We begin with the raw amino-acid sequence, 302 residues long: Protein transport protein SEC13 homolog B (302 aa).

6 WD repeats span residues 9-48 (GHED…GSQQ), 54-95 (GHRG…QWTQ), 101-142 (DHKS…GWDT), 148-201 (AHPV…WKMD), 208-251 (KHTD…EQWE), and 257-296 (DFMT…EWEQ).

It belongs to the WD repeat SEC13 family. As to quaternary structure, part of the nuclear pore complex (NPC). The NPC has an eight-fold symmetrical structure comprising a central transport channel and two rings, the cytoplasmic and nuclear rings, to which eight filaments are attached. The cytoplasmic filaments have loose ends, while the nuclear filaments are joined in a distal ring, forming a nuclear basket. NPCs are highly dynamic in configuration and composition, and can be devided in 3 subcomplexes, the NUP62 subcomplex, the NUP107-160 subcomplex and the NUP93 subcomplex, containing approximately 30 different nucleoporin proteins. Interacts with MAG5, SEC31A and SEC31B.

It localises to the golgi apparatus. It is found in the endoplasmic reticulum. The protein resides in the nucleus envelope. Its subcellular location is the nucleus. The protein localises to the nuclear pore complex. Required for protein transport from the endoplasmic reticulum to the Golgi apparatus. This is Protein transport protein SEC13 homolog B from Arabidopsis thaliana (Mouse-ear cress).